Reading from the N-terminus, the 79-residue chain is Putative membrane protein insertion efficiency factor (79 aa).

It belongs to the UPF0161 family.

It is found in the cell inner membrane. Functionally, could be involved in insertion of integral membrane proteins into the membrane. The protein is Putative membrane protein insertion efficiency factor of Bacteroides thetaiotaomicron (strain ATCC 29148 / DSM 2079 / JCM 5827 / CCUG 10774 / NCTC 10582 / VPI-5482 / E50).